Here is a 291-residue protein sequence, read N- to C-terminus: 2-C-methyl-D-erythritol 4-phosphate cytidylyltransferase (291 aa).

The disordered stretch occupies residues 1-23 (MTERDFDTPVETPTVQPAPAQGT).

Belongs to the IspD/TarI cytidylyltransferase family. IspD subfamily.

The catalysed reaction is 2-C-methyl-D-erythritol 4-phosphate + CTP + H(+) = 4-CDP-2-C-methyl-D-erythritol + diphosphate. It functions in the pathway isoprenoid biosynthesis; isopentenyl diphosphate biosynthesis via DXP pathway; isopentenyl diphosphate from 1-deoxy-D-xylulose 5-phosphate: step 2/6. In terms of biological role, catalyzes the formation of 4-diphosphocytidyl-2-C-methyl-D-erythritol from CTP and 2-C-methyl-D-erythritol 4-phosphate (MEP). The polypeptide is 2-C-methyl-D-erythritol 4-phosphate cytidylyltransferase (Bifidobacterium longum subsp. infantis (strain ATCC 15697 / DSM 20088 / JCM 1222 / NCTC 11817 / S12)).